Reading from the N-terminus, the 171-residue chain is S-ribosylhomocysteine lyase (171 aa).

Fe cation is bound by residues H54, H58, and C128.

The protein belongs to the LuxS family. In terms of assembly, homodimer. Fe cation serves as cofactor.

It catalyses the reaction S-(5-deoxy-D-ribos-5-yl)-L-homocysteine = (S)-4,5-dihydroxypentane-2,3-dione + L-homocysteine. Its function is as follows. Involved in the synthesis of autoinducer 2 (AI-2) which is secreted by bacteria and is used to communicate both the cell density and the metabolic potential of the environment. The regulation of gene expression in response to changes in cell density is called quorum sensing. Catalyzes the transformation of S-ribosylhomocysteine (RHC) to homocysteine (HC) and 4,5-dihydroxy-2,3-pentadione (DPD). The polypeptide is S-ribosylhomocysteine lyase (Escherichia fergusonii (strain ATCC 35469 / DSM 13698 / CCUG 18766 / IAM 14443 / JCM 21226 / LMG 7866 / NBRC 102419 / NCTC 12128 / CDC 0568-73)).